Reading from the N-terminus, the 938-residue chain is Translation initiation factor IF-2 (938 aa).

Over residues 57–205 (DKSKKVASKE…PKSEETKSEE (149 aa)) the composition is skewed to basic and acidic residues. Positions 57 to 350 (DKSKKVASKE…RSADDLAQQE (294 aa)) are disordered. Residues 206–215 (TTEGGESEEK) show a composition bias toward acidic residues. The span at 248–259 (KKEEKKEDDKKD) shows a compositional bias: basic and acidic residues. 2 stretches are compositionally biased toward basic residues: residues 260–270 (KDRRKKRRRRI) and 285–296 (GAKKGGRTRSKP). Residues 297–319 (ITKEEPTEEEVQKQVRETLEKLQ) are compositionally biased toward basic and acidic residues. Over residues 323–333 (SKGKGAKYRRQ) the composition is skewed to basic residues. Over residues 334–344 (KRDEHRQRSAD) the composition is skewed to basic and acidic residues. Residues 434 to 602 (TRAPIVTVMG…KVLLEAEILE (169 aa)) form the tr-type G domain. The interval 443 to 450 (GHVDHGKT) is G1. 443 to 450 (GHVDHGKT) serves as a coordination point for GTP. The segment at 468 to 472 (GITQH) is G2. The interval 490 to 493 (DTPG) is G3. Residues 490 to 494 (DTPGH) and 544 to 547 (NKSD) each bind GTP. A G4 region spans residues 544 to 547 (NKSD). The G5 stretch occupies residues 580–582 (SAK).

This sequence belongs to the TRAFAC class translation factor GTPase superfamily. Classic translation factor GTPase family. IF-2 subfamily.

Its subcellular location is the cytoplasm. Its function is as follows. One of the essential components for the initiation of protein synthesis. Protects formylmethionyl-tRNA from spontaneous hydrolysis and promotes its binding to the 30S ribosomal subunits. Also involved in the hydrolysis of GTP during the formation of the 70S ribosomal complex. The sequence is that of Translation initiation factor IF-2 from Christiangramia forsetii (strain DSM 17595 / CGMCC 1.15422 / KT0803) (Gramella forsetii).